Here is a 186-residue protein sequence, read N- to C-terminus: Probable GTP-binding protein EngB (186 aa).

In terms of domain architecture, EngB-type G spans Asp-18–Leu-186. GTP contacts are provided by residues Gly-26–Ser-33, Gly-52–Leu-56, Asp-69–Gly-72, Asn-135–Asp-138, and Val-166–Ala-168. Residues Ser-33 and Thr-54 each contribute to the Mg(2+) site.

Belongs to the TRAFAC class TrmE-Era-EngA-EngB-Septin-like GTPase superfamily. EngB GTPase family. Mg(2+) serves as cofactor.

Functionally, necessary for normal cell division and for the maintenance of normal septation. The chain is Probable GTP-binding protein EngB from Malacoplasma penetrans (strain HF-2) (Mycoplasma penetrans).